The chain runs to 397 residues: MMTKNERRQPSWPMIAGVAAAAALVGFGAARGLGSPSGAEVSKLAAAPEKAAASAPAAEPAEVRIPGEYLAAANIAVEPVSAGGVGSVLLAPASVAAVPGSEAVIASRAAGAVLRIQRKLGDAVRAGDVLALVDSPEAAAMAAERKVAQARADLARKTYERESSLFQQGVTPRQEMESARIALDVAQAEVQRAATVAQAAKVSSDGRSVAVVSPIAGRITAQSVTLGAYVAPQAELFRVAGSGAVQVEAYVTAADTSRIAAGSDATIVLANGAPLAGRVQAVTPTVSGSARAATVVVTPVDANSGLIVGEGVQVRLHTKAADANAMSVPEDAVQNLDGRDVVFVRTQQGFRPKSVLVGSRSGGVAQILSGVKPGEQVATRNAFLIKAEMNKAGGDDE.

The chain crosses the membrane as a helical span at residues 10–30; that stretch reads PSWPMIAGVAAAAALVGFGAA. Residues 137-195 are a coiled coil; that stretch reads EAAAMAAERKVAQARADLARKTYERESSLFQQGVTPRQEMESARIALDVAQAEVQRAAT.

It belongs to the membrane fusion protein (MFP) (TC 8.A.1) family.

It localises to the cell inner membrane. Its function is as follows. Component of the NCC cation efflux system that confers resistance to nickel, cobalt and cadmium. The protein is Nickel-cobalt-cadmium resistance protein NccB (nccB) of Alcaligenes xylosoxydans xylosoxydans (Achromobacter xylosoxidans).